The primary structure comprises 336 residues: N-acetyl-gamma-glutamyl-phosphate reductase (336 aa).

The active site involves C156.

This sequence belongs to the NAGSA dehydrogenase family. Type 1 subfamily.

The protein localises to the cytoplasm. The catalysed reaction is N-acetyl-L-glutamate 5-semialdehyde + phosphate + NADP(+) = N-acetyl-L-glutamyl 5-phosphate + NADPH + H(+). Its pathway is amino-acid biosynthesis; L-arginine biosynthesis; N(2)-acetyl-L-ornithine from L-glutamate: step 3/4. In terms of biological role, catalyzes the NADPH-dependent reduction of N-acetyl-5-glutamyl phosphate to yield N-acetyl-L-glutamate 5-semialdehyde. The protein is N-acetyl-gamma-glutamyl-phosphate reductase of Moritella abyssi.